The following is a 217-amino-acid chain: Putative thymidylate synthase (217 aa).

Cys-139 is a catalytic residue.

It belongs to the thymidylate synthase family. Archaeal-type ThyA subfamily. Monomer.

It localises to the cytoplasm. It participates in pyrimidine metabolism; dTTP biosynthesis. May catalyze the biosynthesis of dTMP using an unknown cosubstrate. In Methanosarcina mazei (strain ATCC BAA-159 / DSM 3647 / Goe1 / Go1 / JCM 11833 / OCM 88) (Methanosarcina frisia), this protein is Putative thymidylate synthase.